Consider the following 452-residue polypeptide: Elongation factor Tu, mitochondrial (452 aa).

The transit peptide at 1–43 directs the protein to the mitochondrion; sequence MAAATLLRATPRFSGLCASPTPFLQGRLRPLKAPASPFLCRGL. In terms of domain architecture, tr-type G spans 55-251; it reads KPHVNVGTIG…AVDTYIPVPT (197 aa). The G1 stretch occupies residues 64–71; sequence GHVDHGKT. Residues D67, G69, K70, T71, and T72 each contribute to the GTP site. Mg(2+) is bound at residue T71. K79 carries the post-translational modification N6-acetyllysine. Position 88 is an N6-acetyllysine; alternate (K88). K88 is modified (N6-succinyllysine; alternate). A G2 region spans residues 105 to 109; that stretch reads GITIN. The segment at 126-129 is G3; it reads DCPG. 5 residues coordinate GTP: N181, D184, S219, A220, and L221. A G4 region spans residues 181–184; the sequence is NKAD. Residues 219–221 are G5; that stretch reads SAL. K234 bears the N6-succinyllysine mark. N6-acetyllysine is present on K256. Position 278 is a phosphothreonine (T278). At K286 the chain carries N6-succinyllysine. A Phosphoserine modification is found at S312. K361 and K418 each carry N6-acetyllysine.

It belongs to the TRAFAC class translation factor GTPase superfamily. Classic translation factor GTPase family. EF-Tu/EF-1A subfamily. As to quaternary structure, interacts with NLRX1. Interacts with ATG16L1.

It is found in the mitochondrion. The catalysed reaction is GTP + H2O = GDP + phosphate + H(+). GTP hydrolase that promotes the GTP-dependent binding of aminoacyl-tRNA to the A-site of ribosomes during protein biosynthesis. Plays a role in the regulation of autophagy and innate immunity. Recruits ATG5-ATG12 and NLRX1 at mitochondria and serves as a checkpoint of the RIGI-MAVS pathway. In turn, inhibits RLR-mediated type I interferon while promoting autophagy. The protein is Elongation factor Tu, mitochondrial of Rattus norvegicus (Rat).